We begin with the raw amino-acid sequence, 180 residues long: Large ribosomal subunit protein uL5 (180 aa).

This sequence belongs to the universal ribosomal protein uL5 family. Part of the 50S ribosomal subunit; part of the 5S rRNA/L5/L18/L25 subcomplex. Contacts the 5S rRNA and the P site tRNA. Forms a bridge to the 30S subunit in the 70S ribosome.

In terms of biological role, this is one of the proteins that bind and probably mediate the attachment of the 5S RNA into the large ribosomal subunit, where it forms part of the central protuberance. In the 70S ribosome it contacts protein S13 of the 30S subunit (bridge B1b), connecting the 2 subunits; this bridge is implicated in subunit movement. Contacts the P site tRNA; the 5S rRNA and some of its associated proteins might help stabilize positioning of ribosome-bound tRNAs. In Streptococcus uberis (strain ATCC BAA-854 / 0140J), this protein is Large ribosomal subunit protein uL5.